The primary structure comprises 100 residues: Secreted protein of Ly-6 domain 1 (100 aa).

A signal peptide spans 1–22; it reads MAKCLLLLLLVVLSSLLGLPQA. The UPAR/Ly6 domain maps to 23–100; sequence LECFQCNRVN…CHDSPLCNKF (78 aa). Intrachain disulfides connect C25/C52, C28/C37, C44/C70, C74/C90, and C91/C97. N60 carries an N-linked (GlcNAc...) asparagine glycan.

Post-translationally, glycosylated. As to expression, expressed in placenta, where it is detected in both fetal tissues (cotyledon and intercotyledon) and maternal tissues (caruncle and intercaruncular endometrium) (at protein level). Expressed in the mesenchyme area of villi in the cotyledon (at protein level). In endometrium, expressed in the luminal epithelium and weakly in the subluminal stroma (at protein level). Detected in trophoblast mononucleate cells (TMCs) (at protein level). Also detected in trophoblast binucleate cells (BNCs). Overall, expression is strongest in fetal tissue and lower in maternal tissue. Not detected in other tissues tested.

It localises to the secreted. In terms of biological role, binds specifically to type I collagen. This Bos taurus (Bovine) protein is Secreted protein of Ly-6 domain 1.